A 1336-amino-acid polypeptide reads, in one-letter code: SH3 domain and tetratricopeptide repeat-containing protein 1 (1336 aa).

Residue Met-1 is modified to N-acetylmethionine. Disordered stretches follow at residues 1–76 (MENL…PPCQ) and 225–266 (TGPR…SEEV). The span at 18–27 (GPVGPSGGGS) shows a compositional bias: gly residues. Residues 46–61 (AGPEEAKAPVRGDEAP) are compositionally biased toward basic and acidic residues. Low complexity-rich tracts occupy residues 62-74 (PARV…GTPP) and 247-266 (EAAP…SEEV). The 64-residue stretch at 305-368 (MAVGLASALA…RSSLISMQGP (64 aa)) folds into the SH3 domain. 8 TPR repeats span residues 560–593 (ARLC…LEGS), 601–634 (VAVY…LLGT), 665–698 (ARAC…HRDS), 786–819 (GPLY…SAIA), 863–896 (GVIA…ARDL), 946–979 (THVL…AVEM), 1027–1063 (GQLL…FIDL), and 1192–1225 (RVAY…CNSP). Tyr-1248 is modified (phosphotyrosine). The TPR 9 repeat unit spans residues 1277-1311 (LKIYTRLATIYHNFLLDREKSLFFYQKARTFATEL).

The protein is SH3 domain and tetratricopeptide repeat-containing protein 1 (SH3TC1) of Homo sapiens (Human).